The chain runs to 150 residues: Large ribosomal subunit protein uL11 (150 aa).

The interval 83–111 (AAGLKPQGKRNRAKGSEKPGRQTAGTVTA) is disordered.

The protein belongs to the universal ribosomal protein uL11 family. As to quaternary structure, part of the ribosomal stalk of the 50S ribosomal subunit. Interacts with L10 and the large rRNA to form the base of the stalk. L10 forms an elongated spine to which L12 dimers bind in a sequential fashion forming a multimeric L10(L12)X complex. One or more lysine residues are methylated.

In terms of biological role, forms part of the ribosomal stalk which helps the ribosome interact with GTP-bound translation factors. In Paracoccus denitrificans (strain Pd 1222), this protein is Large ribosomal subunit protein uL11.